Here is a 1379-residue protein sequence, read N- to C-terminus: DNA-directed RNA polymerase subunit beta (1379 aa).

The protein belongs to the RNA polymerase beta chain family. In terms of assembly, the RNAP catalytic core consists of 2 alpha, 1 beta, 1 beta' and 1 omega subunit. When a sigma factor is associated with the core the holoenzyme is formed, which can initiate transcription.

The catalysed reaction is RNA(n) + a ribonucleoside 5'-triphosphate = RNA(n+1) + diphosphate. Its function is as follows. DNA-dependent RNA polymerase catalyzes the transcription of DNA into RNA using the four ribonucleoside triphosphates as substrates. The protein is DNA-directed RNA polymerase subunit beta of Rhizobium leguminosarum bv. trifolii (strain WSM2304).